Here is a 90-residue protein sequence, read N- to C-terminus: Small ribosomal subunit protein bS16 (90 aa).

The protein belongs to the bacterial ribosomal protein bS16 family.

The chain is Small ribosomal subunit protein bS16 from Streptococcus agalactiae serotype III (strain NEM316).